An 82-amino-acid chain; its full sequence is Small ribosomal subunit protein bS16 (82 aa).

This sequence belongs to the bacterial ribosomal protein bS16 family.

This is Small ribosomal subunit protein bS16 from Mannheimia succiniciproducens (strain KCTC 0769BP / MBEL55E).